The sequence spans 183 residues: Ribonuclease H (183 aa).

The region spanning 2–151 (SQARFIAFSD…VDQLAQAAAR (150 aa)) is the RNase H type-1 domain. 4 residues coordinate Mg(2+): Asp11, Glu57, Asp79, and Asp143.

The protein belongs to the RNase H family. In terms of assembly, monomer. Mg(2+) serves as cofactor.

Its subcellular location is the cytoplasm. The enzyme catalyses Endonucleolytic cleavage to 5'-phosphomonoester.. Functionally, endonuclease that specifically degrades the RNA of RNA-DNA hybrids. The protein is Ribonuclease H of Anaeromyxobacter dehalogenans (strain 2CP-1 / ATCC BAA-258).